The following is a 1180-amino-acid chain: Lon protease homolog 2, peroxisomal (1180 aa).

The Lon N-terminal domain maps to 19-366 (LPTCKLDSNL…ELINMINQLI (348 aa)). Residues 416 to 465 (PISNRGNIKSFNNSENGNNNKTNGSGITSRRPKSNEDGGEVYDEEDDDEE) form a disordered region. Low complexity predominate over residues 422-444 (NIKSFNNSENGNNNKTNGSGITS). Residues 452-465 (DGGEVYDEEDDDEE) are compositionally biased toward acidic residues. Position 667-674 (667-674 (GPPGTGKT)) interacts with ATP. Residues 924-1163 (NSRVGIVNGL…YDVMKILWGE (240 aa)) enclose the Lon proteolytic domain. Catalysis depends on residues Ser-1032 and Lys-1075.

This sequence belongs to the peptidase S16 family.

The protein resides in the peroxisome matrix. The catalysed reaction is Hydrolysis of proteins in presence of ATP.. In terms of biological role, ATP-dependent serine protease that mediates the selective degradation of misfolded and unassembled polypeptides in the peroxisomal matrix. Necessary for type 2 peroxisome targeting signal (PTS2)-containing protein processing and facilitates peroxisome matrix protein import. This is Lon protease homolog 2, peroxisomal from Scheffersomyces stipitis (strain ATCC 58785 / CBS 6054 / NBRC 10063 / NRRL Y-11545) (Yeast).